Reading from the N-terminus, the 344-residue chain is Selenide, water dikinase (344 aa).

Residue Cys-16 is part of the active site. ATP-binding positions include Lys-19 and 47-49 (SRD). Residue Asp-50 participates in Mg(2+) binding. ATP contacts are provided by residues Asp-67, Asp-90, and 138–140 (GHS). Asp-90 provides a ligand contact to Mg(2+). Asp-226 is a binding site for Mg(2+).

The protein belongs to the selenophosphate synthase 1 family. Class I subfamily. Homodimer. It depends on Mg(2+) as a cofactor.

It carries out the reaction hydrogenselenide + ATP + H2O = selenophosphate + AMP + phosphate + 2 H(+). Synthesizes selenophosphate from selenide and ATP. The chain is Selenide, water dikinase from Bordetella bronchiseptica (strain ATCC BAA-588 / NCTC 13252 / RB50) (Alcaligenes bronchisepticus).